Consider the following 396-residue polypeptide: Putative nickel insertion protein (396 aa).

Belongs to the LarC family.

The polypeptide is Putative nickel insertion protein (Methanococcoides burtonii (strain DSM 6242 / NBRC 107633 / OCM 468 / ACE-M)).